The following is a 110-amino-acid chain: Large ribosomal subunit protein uL24 (110 aa).

The protein belongs to the universal ribosomal protein uL24 family. In terms of assembly, part of the 50S ribosomal subunit.

One of two assembly initiator proteins, it binds directly to the 5'-end of the 23S rRNA, where it nucleates assembly of the 50S subunit. In terms of biological role, one of the proteins that surrounds the polypeptide exit tunnel on the outside of the subunit. This is Large ribosomal subunit protein uL24 from Desulfovibrio desulfuricans (strain ATCC 27774 / DSM 6949 / MB).